The chain runs to 465 residues: Cysteine--tRNA ligase (465 aa).

Cys-29 contributes to the Zn(2+) binding site. A 'HIGH' region motif is present at residues 31-41 (PTVYNYIHIGN). Residues Cys-209, His-234, and Glu-238 each contribute to the Zn(2+) site. The 'KMSKS' region motif lies at 266-270 (KMSKS). Lys-269 is an ATP binding site. Ser-270 carries the phosphoserine modification.

It belongs to the class-I aminoacyl-tRNA synthetase family. In terms of assembly, monomer. Zn(2+) serves as cofactor.

The protein resides in the cytoplasm. It carries out the reaction tRNA(Cys) + L-cysteine + ATP = L-cysteinyl-tRNA(Cys) + AMP + diphosphate. This Bacillus cytotoxicus (strain DSM 22905 / CIP 110041 / 391-98 / NVH 391-98) protein is Cysteine--tRNA ligase.